We begin with the raw amino-acid sequence, 233 residues long: Preprocaerulein type-4 (233 aa).

Positions Met-1–Ala-26 are cleaved as a signal peptide. Residues Asp-27–Gly-72 constitute a propeptide that is removed on maturation. Residue Gln-73 is modified to Pyrrolidone carboxylic acid. A Sulfotyrosine modification is found at Tyr-76. Phenylalanine amide is present on Phe-82. Residues Asp-86–Gly-87 constitute a propeptide that is removed on maturation. Gln-88 carries the pyrrolidone carboxylic acid modification. Sulfotyrosine is present on Tyr-91. Residue Phe-97 is modified to Phenylalanine amide. Positions Asp-101 to Gly-151 are excised as a propeptide. Gln-152 is subject to Pyrrolidone carboxylic acid. Tyr-155 is subject to Sulfotyrosine. The residue at position 161 (Phe-161) is a Phenylalanine amide. Positions Asp-165 to Gly-215 are excised as a propeptide. A disordered region spans residues Leu-197 to Asp-233. At Gln-216 the chain carries Pyrrolidone carboxylic acid. Sulfotyrosine is present on Tyr-219. Position 225 is a phenylalanine amide (Phe-225). A propeptide spanning residues Asn-229–Asp-233 is cleaved from the precursor.

This sequence belongs to the gastrin/cholecystokinin family. As to expression, expressed by the skin glands.

The protein resides in the secreted. In terms of biological role, the pharmacological activities of caerulein are quite similar to the physiological activities of gastrin and related peptides. The protein is Preprocaerulein type-4 of Xenopus laevis (African clawed frog).